The chain runs to 479 residues: U6 small nuclear RNA (adenine-(43)-N(6))-methyltransferase (479 aa).

S-adenosyl-L-methionine is bound by residues Lys82, Gly108, Asp131, Thr164, and Asn184. An involved in dlc-1 binding region spans residues 420-424; it reads DNASQ.

This sequence belongs to the methyltransferase superfamily. METTL16/RlmF family. In terms of assembly, self-associates. Interacts with dlc-1; the interaction is direct, and is required for nuclear localization of mett-10. As to expression, expressed in the intestine, vulva, and cells of the somatic gonad including distal tip cells, gonadal sheath cells and spermatheca.

The protein resides in the nucleus. It catalyses the reaction an adenosine in mRNA + S-adenosyl-L-methionine = an N(6)-methyladenosine in mRNA + S-adenosyl-L-homocysteine + H(+). The catalysed reaction is adenosine in U6 snRNA + S-adenosyl-L-methionine = N(6)-methyladenosine in U6 snRNA + S-adenosyl-L-homocysteine + H(+). In terms of biological role, RNA N6-methyltransferase that methylates adenosine residues at the N(6) position of a subset of RNAs and is involved in S-adenosyl-L-methionine homeostasis by regulating splicing of S-adenosylmethionine synthase transcripts (sams-3, sams-4 and sams-5). Able to N6-methylate a subset of mRNAs containing the 5'UACAGAAAC-3' nonamer sequence. Plays a key role in S-adenosyl-L-methionine homeostasis: under rich-diet conditions, catalyzes N6-methylation of S-adenosylmethionine synthase mRNAs (sams-3, sams-4 and sams-5), directly inhibiting splicing and protein production of S-adenosylmethionine synthase. In addition to mRNAs, also able to mediate N6-methylation of U6 small nuclear RNA (U6 snRNA). Required for gamete production, inhibiting germ cell proliferative fate and ensuring germ cell meiotic development. Also promotes progression of the mitotic cell cycle in those germ cells that continue to proliferate. Plays a role in the development of the vulva, somatic gonad and embryo. The protein is U6 small nuclear RNA (adenine-(43)-N(6))-methyltransferase of Caenorhabditis elegans.